Consider the following 486-residue polypeptide: Ribulose bisphosphate carboxylase large chain (486 aa).

The substrate site is built by Asn-126 and Thr-176. Lys-178 acts as the Proton acceptor in catalysis. Substrate is bound at residue Lys-180. 3 residues coordinate Mg(2+): Lys-204, Asp-206, and Glu-207. Lys-204 carries the N6-carboxylysine modification. His-296 serves as the catalytic Proton acceptor. Substrate-binding residues include Arg-297, His-329, and Ser-381.

This sequence belongs to the RuBisCO large chain family. Type I subfamily. As to quaternary structure, heterohexadecamer of 8 large chains and 8 small chains. Requires Mg(2+) as cofactor.

The catalysed reaction is 2 (2R)-3-phosphoglycerate + 2 H(+) = D-ribulose 1,5-bisphosphate + CO2 + H2O. The enzyme catalyses D-ribulose 1,5-bisphosphate + O2 = 2-phosphoglycolate + (2R)-3-phosphoglycerate + 2 H(+). Functionally, ruBisCO catalyzes two reactions: the carboxylation of D-ribulose 1,5-bisphosphate, the primary event in carbon dioxide fixation, as well as the oxidative fragmentation of the pentose substrate. Both reactions occur simultaneously and in competition at the same active site. The sequence is that of Ribulose bisphosphate carboxylase large chain from Methylacidiphilum infernorum (isolate V4) (Methylokorus infernorum (strain V4)).